Here is a 694-residue protein sequence, read N- to C-terminus: Cyclic nucleotide-gated ion channel 4 (694 aa).

Over residues 1 to 15 (MATEQEFTRASRFSR) the composition is skewed to basic and acidic residues. The disordered stretch occupies residues 1–64 (MATEQEFTRA…RIGLTCGGRR (64 aa)). Residues 1-92 (MATEQEFTRA…RSKWVREWNK (92 aa)) are Cytoplasmic-facing. Residues 24–53 (SEEDNTEEEDEEEEEMEEIEEEEEEEEEED) are compositionally biased toward acidic residues. The helical transmembrane segment at 93-113 (VFLLVCATGLFVDPLFLYTLS) threads the bilayer. The Extracellular portion of the chain corresponds to 114-126 (VSDTCMCLLVDGW). The chain crosses the membrane as a helical span at residues 127–147 (LALTVTALRSMTDLLHLWNIW). Over 148 to 187 (IQFKIARRWPYPGGDSDGDTNKGGGTRGSTRVAPPYVKKN) the chain is Cytoplasmic. The helical transmembrane segment at 188-208 (GFFFDLFVILPLPQVVLWVVI) threads the bilayer. Over 209 to 216 (PSLLKRGS) the chain is Extracellular. A helical membrane pass occupies residues 217-237 (VTLVVSVLLVTFLFQYLPKIY). Over 238–251 (HSIRHLRRNATLSG) the chain is Cytoplasmic. The chain crosses the membrane as a helical span at residues 252 to 272 (YIFGTVWWGIALNMIAYFVAA). Over 273–392 (HAAGACWYLL…LESTTEWSEV (120 aa)) the chain is Extracellular. The helical transmembrane segment at 393-413 (VFNIIVLTSGLLLVTMLIGNI) threads the bilayer. Residues 414–694 (KVFLHATTSK…KPNPDDFDDY (281 aa)) lie on the Cytoplasmic side of the membrane. Residues 496-626 (LFQH…ARYY) and aspartate 565 contribute to the a nucleoside 3',5'-cyclic phosphate site. The segment at 610-626 (FRYTFVNEKVKRSARYY) is calmodulin-binding. Residues 631–660 (RTWAAVAVQLAWRRYKHRLTLTSLSFIRPR) enclose the IQ domain.

Belongs to the cyclic nucleotide-gated cation channel (TC 1.A.1.5) family. Homotetramer or heterotetramer.

It is found in the cell membrane. Acts as a cyclic nucleotide-gated ion channel. Permeable to potassium and sodium in a cyclic nucleotide-dependent fashion (cAMP or cGMP). Might constitute a common downstream component of the signaling pathways leading to hypersensitive response (HR). The protein is Cyclic nucleotide-gated ion channel 4 (CNGC4) of Arabidopsis thaliana (Mouse-ear cress).